A 372-amino-acid polypeptide reads, in one-letter code: GPN-loop GTPase 1 (372 aa).

N-acetylalanine is present on alanine 2. 29 to 34 (GSGKTT) contacts GTP. A Gly-Pro-Asn (GPN)-loop; involved in dimer interface motif is present at residues 86-88 (GPN). 189 to 192 (NKTD) lines the GTP pocket. Residues serine 301 and serine 314 each carry the phosphoserine modification. The tract at residues 303–372 (ALDPEAGKGN…ESMAHWKRNK (70 aa)) is disordered. A Phosphothreonine modification is found at threonine 328. The span at 330–342 (DEEDEEADSDTDD) shows a compositional bias: acidic residues. Serine 338 bears the Phosphoserine mark. Threonine 340 is subject to Phosphothreonine. A compositionally biased stretch (basic and acidic residues) spans 343–355 (IDHRVTEESREEP).

This sequence belongs to the GPN-loop GTPase family. In terms of assembly, heterodimer with GPN3. Binds to RNA polymerase II (RNAPII). Interacts directly with RNAPII subunits RPB4 and RPB7 and the CTD of RPB1. Interacts with XPA.

The protein localises to the cytoplasm. The protein resides in the nucleus. In terms of biological role, small GTPase required for proper nuclear import of RNA polymerase II (RNAPII). May act at an RNAP assembly step prior to nuclear import. Forms an interface between the RNA polymerase II enzyme and chaperone/scaffolding proteins, suggesting that it is required to connect RNA polymerase II to regulators of protein complex formation. May be involved in nuclear localization of XPA. The sequence is that of GPN-loop GTPase 1 from Mus musculus (Mouse).